Reading from the N-terminus, the 428-residue chain is MSSALTLQPVRRFSGEINLPGSKSVSNRALLLAAQARGVTRLHNLLDSDDVRYMLDALKALGVRYQLSDCRTRCEVQGLGGTLSAHGALTLFLGNAGTAMRPLAAALSLGLRDVILTGEPRMKERPIAHLVTALRQGGAQVDYLESDGYPPVRLHGGFNGGEISVDGSVSSQFLTALLMAAPMAAEETRITILGELVSKPYIAITLAMMRAFGVEVENHAYRHFVVRGGQVYQAPSDYLVEGDASSASYFLAGAAIAGGTVRVTGIGRHSMQGDIHFADVLEKMGAQVEWGNDYIACTRDSLHGIDMDMNAIPDAAMTIATTALFAKGPTTLRNIYNWRVKETDRLAAMASELRKVGAVVEEGTDFLRIEPPAQLQAAQIATYNDHRMAMCFSLVALSGTPVTICDPGCTAKTFPDYFRQFSALCHPR.

Positions 23, 24, and 28 each coordinate 3-phosphoshikimate. A phosphoenolpyruvate-binding site is contributed by lysine 23. Glycine 97 and arginine 125 together coordinate phosphoenolpyruvate. Positions 170, 171, 172, 198, 314, 337, and 341 each coordinate 3-phosphoshikimate. Residue glutamine 172 coordinates phosphoenolpyruvate. Aspartate 314 serves as the catalytic Proton acceptor. Phosphoenolpyruvate contacts are provided by arginine 345, arginine 387, and lysine 412.

Belongs to the EPSP synthase family. As to quaternary structure, monomer.

The protein localises to the cytoplasm. It carries out the reaction 3-phosphoshikimate + phosphoenolpyruvate = 5-O-(1-carboxyvinyl)-3-phosphoshikimate + phosphate. It functions in the pathway metabolic intermediate biosynthesis; chorismate biosynthesis; chorismate from D-erythrose 4-phosphate and phosphoenolpyruvate: step 6/7. Catalyzes the transfer of the enolpyruvyl moiety of phosphoenolpyruvate (PEP) to the 5-hydroxyl of shikimate-3-phosphate (S3P) to produce enolpyruvyl shikimate-3-phosphate and inorganic phosphate. The polypeptide is 3-phosphoshikimate 1-carboxyvinyltransferase (Edwardsiella ictaluri (strain 93-146)).